Here is a 163-residue protein sequence, read N- to C-terminus: RNA pyrophosphohydrolase (163 aa).

A Nudix hydrolase domain is found at 6 to 149 (GYRLNVGIVI…KRDVYRQVMK (144 aa)). The Nudix box motif lies at 38-59 (GGIHLTESPEEAMYRELFEELG).

It belongs to the Nudix hydrolase family. RppH subfamily. A divalent metal cation is required as a cofactor.

In terms of biological role, accelerates the degradation of transcripts by removing pyrophosphate from the 5'-end of triphosphorylated RNA, leading to a more labile monophosphorylated state that can stimulate subsequent ribonuclease cleavage. This Hamiltonella defensa subsp. Acyrthosiphon pisum (strain 5AT) protein is RNA pyrophosphohydrolase.